The chain runs to 172 residues: Protein-export protein SecB (172 aa).

This sequence belongs to the SecB family. In terms of assembly, homotetramer, a dimer of dimers. One homotetramer interacts with 1 SecA dimer.

Its subcellular location is the cytoplasm. Its function is as follows. One of the proteins required for the normal export of preproteins out of the cell cytoplasm. It is a molecular chaperone that binds to a subset of precursor proteins, maintaining them in a translocation-competent state. It also specifically binds to its receptor SecA. In Cupriavidus pinatubonensis (strain JMP 134 / LMG 1197) (Cupriavidus necator (strain JMP 134)), this protein is Protein-export protein SecB.